The primary structure comprises 314 residues: GTP cyclohydrolase FolE2 (314 aa).

Positions 290–314 (DASAWSAPQAAAPDQQESFATGNER) are disordered. A compositionally biased stretch (low complexity) spans 291 to 304 (ASAWSAPQAAAPDQ). Polar residues predominate over residues 305–314 (QESFATGNER).

The protein belongs to the GTP cyclohydrolase IV family.

It catalyses the reaction GTP + H2O = 7,8-dihydroneopterin 3'-triphosphate + formate + H(+). The protein operates within cofactor biosynthesis; 7,8-dihydroneopterin triphosphate biosynthesis; 7,8-dihydroneopterin triphosphate from GTP: step 1/1. In terms of biological role, converts GTP to 7,8-dihydroneopterin triphosphate. This chain is GTP cyclohydrolase FolE2, found in Pseudomonas putida (strain ATCC 47054 / DSM 6125 / CFBP 8728 / NCIMB 11950 / KT2440).